Reading from the N-terminus, the 973-residue chain is MASILDEYEDSLSRSAVLQTGCPSVGIPHSGYVSAHLEKEVPIFTKQRVDFTPSERITSLVVSCNQLCMSLGKDTLLRIDLGKASEPNRVELGRKDDAKVHKMFLDHTGSHLLVALSSTEVLYMNRNGQKARPLARWKGQLVESVGWNKAMGNESSTGPILVGTAQGQIFEAELSASEGGLFGPAPDLYFRPLYVLNEEGGPAPVCSLEAERGPDGRGFVIATTRQRLFQFIGRAVEDTEAQGFAGLFAAYTDHPPPFREFPSNLGYSELAFYTPKLRSAPRAFAWMMGDGVLYGSLDCGRPDSLLSEERVWEYPAGVGPGANPPLAIVLTQFHFLLLLADRVEAVCTLTGQVVLRDHFLEKFGPLRHMVKDSSTGHLWAYTERAVFRYHVQREARDVWRTYLDMNRFDLAKEYCRERPDCLDTVLAREADFCFRQHRYLESARCYALTQSYFEEIALKFLEARQEEALAEFLQRKLAGLKPTERTQATLLTTWLTELYLSRLGALQGDPDALTLYRDTRECFRTFLSSPRHKEWLFASRASIHELLASHGDTEHMVYFAVIMQDYERVVAYHCQHEAYEEALAVLARHRDPQLFYKFSPILIRHIPRQLVDAWIEMGSRLDARQLIPALVNYSQGGEAQQVSQAIRYMEFCVNVLGETEQAIHNYLLSLYARGQPASLLAYLEQAGASPHRVHYDLKYALRLCAEHGHHRACVHVYKVLELYEEAVDLALQVDVDLAKQCADLPEEDEELRKKLWLKIARHVVQEEEDVQTAMACLASCPLLKIEDVLPFFPDFVTIDHFKEAICSSLKAYNHHIQELQREMEEATASAQRIRRDLQELRGRYGTVEPQDKCSTCDFPLLNRPFYLFLCGHMFHADCLLQAVRPGLPAYKQARLEELQRKLGAAPPPTKGSVKAKEAEAGAAAVGPSREQLKADLDELVAAECVYCGELMIRSIDRPFIDPQRYEEEHLSWL.

Position 2 is an N-acetylalanine (Ala2). Ser3, Ser11, and Ser13 each carry phosphoserine. Position 362 is an N6-acetyllysine (Lys362). Positions 454-481 (EEIALKFLEARQEEALAEFLQRKLAGLK) form a coiled coil. The stretch at 618 to 772 (GSRLDARQLI…VVQEEEDVQT (155 aa)) is one CHCR repeat. At Ser689 the chain carries Phosphoserine. The stretch at 802–848 (KEAICSSLKAYNHHIQELQREMEEATASAQRIRRDLQELRGRYGTVE) forms a coiled coil. An RING-type zinc finger spans residues 853-947 (CSTCDFPLLN…ELVAAECVYC (95 aa)). Position 912 is a phosphoserine (Ser912).

It belongs to the VPS18 family. In terms of assembly, core component of at least two putative endosomal tethering complexes, the homotypic fusion and vacuole protein sorting (HOPS) complex and the class C core vacuole/endosome tethering (CORVET) complex. Their common core is composed of the class C Vps proteins VPS11, VPS16, VPS18 and VPS33A, which in HOPS further associates with VPS39 and VPS41 and in CORVET with VPS8 and TGFBRAP1. Interacts with RAB5C. Interacts with HOOK1. Interacts with STX7, MON1B. Associates with adaptor protein complex 3 (AP-3) and clathrin:AP-3 complexes. Interacts with SYNPO2. Interacts with PLEKHM1.

The protein resides in the late endosome membrane. It is found in the lysosome membrane. It localises to the early endosome. Its subcellular location is the cytoplasmic vesicle. The protein localises to the autophagosome. The protein resides in the clathrin-coated vesicle. In terms of biological role, plays a role in vesicle-mediated protein trafficking to lysosomal compartments including the endocytic membrane transport and autophagic pathways. Believed to act as a core component of the putative HOPS and CORVET endosomal tethering complexes which are proposed to be involved in the Rab5-to-Rab7 endosome conversion probably implicating MON1A/B, and via binding SNAREs and SNARE complexes to mediate tethering and docking events during SNARE-mediated membrane fusion. The HOPS complex is proposed to be recruited to Rab7 on the late endosomal membrane and to regulate late endocytic, phagocytic and autophagic traffic towards lysosomes. The CORVET complex is proposed to function as a Rab5 effector to mediate early endosome fusion probably in specific endosome subpopulations. Required for fusion of endosomes and autophagosomes with lysosomes. Involved in dendrite development of Pukinje cells. The sequence is that of Vacuolar protein sorting-associated protein 18 homolog (Vps18) from Mus musculus (Mouse).